The following is a 319-amino-acid chain: 4-hydroxy-3-methylbut-2-enyl diphosphate reductase (319 aa).

Cys-18 lines the [4Fe-4S] cluster pocket. Positions 47 and 81 each coordinate (2E)-4-hydroxy-3-methylbut-2-enyl diphosphate. Dimethylallyl diphosphate-binding residues include His-47 and His-81. The isopentenyl diphosphate site is built by His-47 and His-81. Position 103 (Cys-103) interacts with [4Fe-4S] cluster. Residue His-131 coordinates (2E)-4-hydroxy-3-methylbut-2-enyl diphosphate. Residue His-131 coordinates dimethylallyl diphosphate. Residue His-131 coordinates isopentenyl diphosphate. The Proton donor role is filled by Glu-133. (2E)-4-hydroxy-3-methylbut-2-enyl diphosphate is bound at residue Thr-172. Cys-202 is a binding site for [4Fe-4S] cluster. Positions 230, 231, 232, and 275 each coordinate (2E)-4-hydroxy-3-methylbut-2-enyl diphosphate. Dimethylallyl diphosphate contacts are provided by Ser-230, Ser-231, Asn-232, and Ser-275. Isopentenyl diphosphate-binding residues include Ser-230, Ser-231, Asn-232, and Ser-275.

It belongs to the IspH family. The cofactor is [4Fe-4S] cluster.

The enzyme catalyses isopentenyl diphosphate + 2 oxidized [2Fe-2S]-[ferredoxin] + H2O = (2E)-4-hydroxy-3-methylbut-2-enyl diphosphate + 2 reduced [2Fe-2S]-[ferredoxin] + 2 H(+). It carries out the reaction dimethylallyl diphosphate + 2 oxidized [2Fe-2S]-[ferredoxin] + H2O = (2E)-4-hydroxy-3-methylbut-2-enyl diphosphate + 2 reduced [2Fe-2S]-[ferredoxin] + 2 H(+). The protein operates within isoprenoid biosynthesis; dimethylallyl diphosphate biosynthesis; dimethylallyl diphosphate from (2E)-4-hydroxy-3-methylbutenyl diphosphate: step 1/1. Its pathway is isoprenoid biosynthesis; isopentenyl diphosphate biosynthesis via DXP pathway; isopentenyl diphosphate from 1-deoxy-D-xylulose 5-phosphate: step 6/6. Catalyzes the conversion of 1-hydroxy-2-methyl-2-(E)-butenyl 4-diphosphate (HMBPP) into a mixture of isopentenyl diphosphate (IPP) and dimethylallyl diphosphate (DMAPP). Acts in the terminal step of the DOXP/MEP pathway for isoprenoid precursor biosynthesis. The chain is 4-hydroxy-3-methylbut-2-enyl diphosphate reductase from Methylocella silvestris (strain DSM 15510 / CIP 108128 / LMG 27833 / NCIMB 13906 / BL2).